A 300-amino-acid polypeptide reads, in one-letter code: N-acetylmuramic acid 6-phosphate etherase 2 (300 aa).

The region spanning 57–220 (ITAAFANGGR…TTGAMIRSGK (164 aa)) is the SIS domain. Residue Glu85 is the Proton donor of the active site. Glu116 is an active-site residue.

It belongs to the GCKR-like family. MurNAc-6-P etherase subfamily. As to quaternary structure, homodimer.

The enzyme catalyses N-acetyl-D-muramate 6-phosphate + H2O = N-acetyl-D-glucosamine 6-phosphate + (R)-lactate. Its pathway is amino-sugar metabolism; 1,6-anhydro-N-acetylmuramate degradation. It functions in the pathway amino-sugar metabolism; N-acetylmuramate degradation. The protein operates within cell wall biogenesis; peptidoglycan recycling. In terms of biological role, specifically catalyzes the cleavage of the D-lactyl ether substituent of MurNAc 6-phosphate, producing GlcNAc 6-phosphate and D-lactate. Together with AnmK, is also required for the utilization of anhydro-N-acetylmuramic acid (anhMurNAc) either imported from the medium or derived from its own cell wall murein, and thus plays a role in cell wall recycling. The polypeptide is N-acetylmuramic acid 6-phosphate etherase 2 (Vibrio parahaemolyticus serotype O3:K6 (strain RIMD 2210633)).